The sequence spans 417 residues: MIDLKFLRENPDAVRASQRSRGEDPALVDALLDADAARRAAVSAADNLRAEQKAASKKVGKASPEERPALLTRAKELAEQVKAAEAAQADADRTFTAAHMAISNVVIEGVPAGGEDCFAVLDVVGEPRAIDDPKDHLELGEALGLIDMERGAKVAGSRFYFLTGRGALLQLGLMQLAVRLATDNGFTLVIPPVLVRPEVMAGTGFLGAHADEVYRLESDDMYLVGTSEVPLAGYHADEIIDLSAGPRRYAGWSSCFRREAGSYGKDTRGIIRVHQFDKVEGFIYCKPEDAAAEHDRLLGWQREMLALIEVPYRVIDVAAGDLGSSAARKYDCEAWVPTQQTYRELTSTSNCTTFQARRLSTRYRDENGKPQIAATLNGTLATTRWLVAILENHQQPDGSVRVPAALVPFVGTEVLEP.

226–228 (TSE) is an L-serine binding site. Residues 257–259 (RRE) and Val273 each bind ATP. Glu280 is an L-serine binding site. 344 to 347 (ELTS) contacts ATP. Residue Thr379 coordinates L-serine.

Belongs to the class-II aminoacyl-tRNA synthetase family. Type-1 seryl-tRNA synthetase subfamily. Homodimer. The tRNA molecule binds across the dimer.

Its subcellular location is the cytoplasm. The enzyme catalyses tRNA(Ser) + L-serine + ATP = L-seryl-tRNA(Ser) + AMP + diphosphate + H(+). It catalyses the reaction tRNA(Sec) + L-serine + ATP = L-seryl-tRNA(Sec) + AMP + diphosphate + H(+). It participates in aminoacyl-tRNA biosynthesis; selenocysteinyl-tRNA(Sec) biosynthesis; L-seryl-tRNA(Sec) from L-serine and tRNA(Sec): step 1/1. In terms of biological role, catalyzes the attachment of serine to tRNA(Ser). Is also able to aminoacylate tRNA(Sec) with serine, to form the misacylated tRNA L-seryl-tRNA(Sec), which will be further converted into selenocysteinyl-tRNA(Sec). The polypeptide is Serine--tRNA ligase (Mycobacterium sp. (strain JLS)).